Here is a 360-residue protein sequence, read N- to C-terminus: Probable butyrate kinase (360 aa).

It belongs to the acetokinase family.

The protein resides in the cytoplasm. The enzyme catalyses butanoate + ATP = butanoyl phosphate + ADP. This chain is Probable butyrate kinase, found in Enterococcus faecalis (strain ATCC 700802 / V583).